The following is a 195-amino-acid chain: Imidazoleglycerol-phosphate dehydratase (195 aa).

The protein belongs to the imidazoleglycerol-phosphate dehydratase family.

Its subcellular location is the cytoplasm. The enzyme catalyses D-erythro-1-(imidazol-4-yl)glycerol 3-phosphate = 3-(imidazol-4-yl)-2-oxopropyl phosphate + H2O. The protein operates within amino-acid biosynthesis; L-histidine biosynthesis; L-histidine from 5-phospho-alpha-D-ribose 1-diphosphate: step 6/9. This chain is Imidazoleglycerol-phosphate dehydratase, found in Frankia casuarinae (strain DSM 45818 / CECT 9043 / HFP020203 / CcI3).